The chain runs to 317 residues: MNSFAGWMKLIDPILSRAIAIIPHLKEIINIAFKPFNGIDKLDDHDHQHLKNRILNIDEKIYYNERKPIRSFLLDNENRSNIILGYNEKIKQLEVAIVKEVISPILIHLSSQRGALIKMEEIPFLAHFEREMKHSLLLPEKDFFIQPVKKVILANLEQGLSYLLDMHPRKNDSGQTRIEYYHKIYSRGFNQESYGSPMLKNNKALELIGYSTYIWNLIGLREDLFLIQFYETGFKSTYMACFPRACSSFLYKHKNAESLDMIFSTLIIESSFIIRVAQSLSFFDDSLSDYFYPRMPLDNNIIRIKTREKENIDHWGN.

This is an uncharacterized protein from Lactuca sativa (Garden lettuce).